Consider the following 374-residue polypeptide: Protein TAB2 homolog, chloroplastic (374 aa).

A chloroplast-targeting transit peptide spans 1–64; the sequence is MATLGFNTRR…SLSITKEQEV (64 aa). The segment at 58-84 is disordered; that stretch reads ITKEQEVANEVEEDDPTSELSYLDPES. Positions 64 to 74 are enriched in acidic residues; the sequence is VANEVEEDDPT.

It localises to the plastid. It is found in the chloroplast. Nuclear genome-encoded A/U-rich RNA-binding protein involved in the biogenesis of photosystem I (PSI) and II (PSII). Required for the light-controlled accumulation of PSI and PSII during early plant development. Does not seem to be required for the translation of mRNAs of the PSI subunits. The sequence is that of Protein TAB2 homolog, chloroplastic from Arabidopsis thaliana (Mouse-ear cress).